The sequence spans 363 residues: MNLFNSHLLSYMVPKNLNLNWNFGFILGILLVLQIISGLMLSFFYVPAKGMAFESTLAVMLNICFGWFVRLYHSFGVSFYFFFMFLHIMKGMWYSSNHLPWSWYSGVVIFVLSIATAFVGYVLPDGQMSFWGATVIGGLLKFFGKANVLIFGGQTVGPETLERFFSIHVILPVIILLVVIFHLYVLHRDGSSNPLAVIDMLAIFRFHPVVLFSDIRFIVIVILLIGVQSGYGFISIFQADPDNSILSDPLNTPAHIIPEWYLLLFYATLKVFPTKVAGLLAMAGMLELLVLLVESRYFKQTVSAMNYHRVWTTSSVPLVPVLFMLGSIGKMVVHVDLIAIGTCVVLSVVLFIYKLLDSARVRA.

The next 4 membrane-spanning stretches (helical) occupy residues 23–43 (FGFI…MLSF), 67–89 (WFVR…LHIM), 102–122 (SWYS…VGYV), and 164–184 (FFSI…FHLY). Heme b contacts are provided by histidine 73 and histidine 87. Residues histidine 168 and histidine 182 each coordinate heme b. Histidine 187 serves as a coordination point for a ubiquinone. 4 helical membrane-spanning segments follow: residues 210–230 (VLFS…VQSG), 271–291 (VFPT…LLVL), 310–330 (VWTT…SIGK), and 332–352 (VVHV…VLFI).

This sequence belongs to the cytochrome b family. In terms of assembly, the main subunits of complex b-c1 are: cytochrome b, cytochrome c1 and the Rieske protein. It depends on heme b as a cofactor.

Its subcellular location is the mitochondrion inner membrane. Component of the ubiquinol-cytochrome c reductase complex (complex III or cytochrome b-c1 complex) that is part of the mitochondrial respiratory chain. The b-c1 complex mediates electron transfer from ubiquinol to cytochrome c. Contributes to the generation of a proton gradient across the mitochondrial membrane that is then used for ATP synthesis. The protein is Cytochrome b (MT-CYB) of Theileria annulata.